Reading from the N-terminus, the 359-residue chain is Probable C-C chemokine receptor type 3 (359 aa).

Residues Met1–Ser38 are Extracellular-facing. The chain crosses the membrane as a helical span at residues Trp39–Ile64. The Cytoplasmic portion of the chain corresponds to Lys65–Lys68. The chain crosses the membrane as a helical span at residues Leu69–Ile95. The Extracellular segment spans residues His96 to Lys111. Residues Cys110 and Cys187 are joined by a disulfide bond. Residues Met112 to Ile133 form a helical membrane-spanning segment. At Asp134–Thr150 the chain is on the cytoplasmic side. Residues Val151 to Phe175 traverse the membrane as a helical segment. Residues His176–Arg201 lie on the Extracellular side of the membrane. A helical transmembrane segment spans residues Phe202–Ile227. Residues Lys228 to Arg243 are Cytoplasmic-facing. Residues Leu244 to Phe268 traverse the membrane as a helical segment. Topologically, residues His269 to Leu285 are extracellular. Residues Ala286–Gly309 form a helical membrane-spanning segment. The Cytoplasmic portion of the chain corresponds to Glu310–Phe359.

This sequence belongs to the G-protein coupled receptor 1 family. In terms of tissue distribution, detected in skeletal muscle and in trace amounts in leukocytes.

Its subcellular location is the cell membrane. Its function is as follows. Receptor for C-C type chemokine. Binds and responds to a variety of chemokines, including CCL11, CCL26, CCL7, CCL13, RANTES(CCL5) and CCL15. Subsequently transduces a signal by increasing the intracellular calcium ions level. In addition acts as a possible functional receptor for NARS1. The sequence is that of Probable C-C chemokine receptor type 3 (Ccr3) from Mus musculus (Mouse).